The following is a 296-amino-acid chain: DNA-3-methyladenine glycosylase (296 aa).

The residue at position 110 (S110) is a Phosphoserine. D209 acts as the Proton acceptor in catalysis.

This sequence belongs to the alkylbase DNA glycosidase AlkA family.

It localises to the nucleus. The catalysed reaction is Hydrolysis of alkylated DNA, releasing 3-methyladenine, 3-methylguanine, 7-methylguanine and 7-methyladenine.. Its function is as follows. Hydrolysis of the deoxyribose N-glycosidic bond to excise 3-methyladenine or 7-methyladenine from the damaged DNA polymer formed by alkylation lesions. This Saccharomyces cerevisiae (strain ATCC 204508 / S288c) (Baker's yeast) protein is DNA-3-methyladenine glycosylase (MAG1).